We begin with the raw amino-acid sequence, 476 residues long: Ribulose bisphosphate carboxylase large chain (476 aa).

Substrate contacts are provided by N124 and T174. K176 serves as the catalytic Proton acceptor. K178 is a substrate binding site. Residues K202, D204, and E205 each contribute to the Mg(2+) site. An N6-carboxylysine modification is found at K202. Catalysis depends on H295, which acts as the Proton acceptor. Substrate is bound by residues R296, H328, and S380.

The protein belongs to the RuBisCO large chain family. Type I subfamily. As to quaternary structure, heterohexadecamer of 8 large chains and 8 small chains; disulfide-linked. The disulfide link is formed within the large subunit homodimers. The cofactor is Mg(2+). Post-translationally, the disulfide bond which can form in the large chain dimeric partners within the hexadecamer appears to be associated with oxidative stress and protein turnover.

It localises to the carboxysome. The catalysed reaction is 2 (2R)-3-phosphoglycerate + 2 H(+) = D-ribulose 1,5-bisphosphate + CO2 + H2O. The enzyme catalyses D-ribulose 1,5-bisphosphate + O2 = 2-phosphoglycolate + (2R)-3-phosphoglycerate + 2 H(+). In terms of biological role, ruBisCO catalyzes two reactions: the carboxylation of D-ribulose 1,5-bisphosphate, the primary event in carbon dioxide fixation, as well as the oxidative fragmentation of the pentose substrate in the photorespiration process. Both reactions occur simultaneously and in competition at the same active site. The protein is Ribulose bisphosphate carboxylase large chain of Cyanothece sp. (strain PCC 7425 / ATCC 29141).